The primary structure comprises 232 residues: Ribonuclease P protein component 3 (232 aa).

The protein belongs to the eukaryotic/archaeal RNase P protein component 3 family. Consists of a catalytic RNA component and at least 4-5 protein subunits. Forms a subcomplex with Rnp2 which stimulates the catalytic RNA.

The protein resides in the cytoplasm. It catalyses the reaction Endonucleolytic cleavage of RNA, removing 5'-extranucleotides from tRNA precursor.. Functionally, part of ribonuclease P, a protein complex that generates mature tRNA molecules by cleaving their 5'-ends. This is Ribonuclease P protein component 3 from Methanocaldococcus jannaschii (strain ATCC 43067 / DSM 2661 / JAL-1 / JCM 10045 / NBRC 100440) (Methanococcus jannaschii).